The sequence spans 206 residues: Urease accessory protein UreG (206 aa).

Residue 14-21 coordinates GTP; sequence GPVGSGKT.

Belongs to the SIMIBI class G3E GTPase family. UreG subfamily. In terms of assembly, homodimer. UreD, UreF and UreG form a complex that acts as a GTP-hydrolysis-dependent molecular chaperone, activating the urease apoprotein by helping to assemble the nickel containing metallocenter of UreC. The UreE protein probably delivers the nickel.

The protein localises to the cytoplasm. Functionally, facilitates the functional incorporation of the urease nickel metallocenter. This process requires GTP hydrolysis, probably effectuated by UreG. This Methylocella silvestris (strain DSM 15510 / CIP 108128 / LMG 27833 / NCIMB 13906 / BL2) protein is Urease accessory protein UreG.